The primary structure comprises 429 residues: UDP-N-acetylglucosamine 1-carboxyvinyltransferase (429 aa).

Phosphoenolpyruvate is bound at residue 22–23 (KN). Arg-102 provides a ligand contact to UDP-N-acetyl-alpha-D-glucosamine. Cys-126 acts as the Proton donor in catalysis. 2-(S-cysteinyl)pyruvic acid O-phosphothioketal is present on Cys-126. UDP-N-acetyl-alpha-D-glucosamine is bound by residues 131–135 (RPVDL), Asp-316, and Ile-338.

This sequence belongs to the EPSP synthase family. MurA subfamily.

It is found in the cytoplasm. The enzyme catalyses phosphoenolpyruvate + UDP-N-acetyl-alpha-D-glucosamine = UDP-N-acetyl-3-O-(1-carboxyvinyl)-alpha-D-glucosamine + phosphate. The protein operates within cell wall biogenesis; peptidoglycan biosynthesis. Functionally, cell wall formation. Adds enolpyruvyl to UDP-N-acetylglucosamine. In Methylobacterium sp. (strain 4-46), this protein is UDP-N-acetylglucosamine 1-carboxyvinyltransferase.